Reading from the N-terminus, the 368-residue chain is Large ribosomal subunit protein mL46 (368 aa).

Residues T53–T81 are disordered. The span at V69 to T81 shows a compositional bias: low complexity.

Belongs to the mitochondrion-specific ribosomal protein mL46 family. As to quaternary structure, component of the mitochondrial large ribosomal subunit (mt-LSU). Mature N.crassa 74S mitochondrial ribosomes consist of a small (37S) and a large (54S) subunit. The 37S small subunit contains a 16S ribosomal RNA (16S mt-rRNA) and 32 different proteins. The 54S large subunit contains a 23S rRNA (23S mt-rRNA) and 42 different proteins.

The protein localises to the mitochondrion. Component of the mitochondrial ribosome (mitoribosome), a dedicated translation machinery responsible for the synthesis of mitochondrial genome-encoded proteins, including at least some of the essential transmembrane subunits of the mitochondrial respiratory chain. The mitoribosomes are attached to the mitochondrial inner membrane and translation products are cotranslationally integrated into the membrane. This chain is Large ribosomal subunit protein mL46 (mrpl17), found in Neurospora crassa (strain ATCC 24698 / 74-OR23-1A / CBS 708.71 / DSM 1257 / FGSC 987).